Here is a 373-residue protein sequence, read N- to C-terminus: Cyclin-A3-1 (373 aa).

Residues 50–80 (AVVLKPQPAPRGGKRAASHAAEPKKPAPPPA) form a disordered region.

It belongs to the cyclin family. Cyclin AB subfamily.

In Oryza sativa subsp. japonica (Rice), this protein is Cyclin-A3-1 (CYCA3-1).